The following is a 406-amino-acid chain: Argininosuccinate synthase (406 aa).

ATP is bound by residues 12–20 (AYSGGLDTS) and Ala39. Residues Tyr90 and Ser95 each contribute to the L-citrulline site. Gly120 contributes to the ATP binding site. 3 residues coordinate L-aspartate: Thr122, Asn126, and Asp127. Asn126 is an L-citrulline binding site. 5 residues coordinate L-citrulline: Arg130, Ser179, Ser188, Glu264, and Tyr276.

This sequence belongs to the argininosuccinate synthase family. Type 1 subfamily. Homotetramer.

The protein resides in the cytoplasm. The enzyme catalyses L-citrulline + L-aspartate + ATP = 2-(N(omega)-L-arginino)succinate + AMP + diphosphate + H(+). The protein operates within amino-acid biosynthesis; L-arginine biosynthesis; L-arginine from L-ornithine and carbamoyl phosphate: step 2/3. This Citrifermentans bemidjiense (strain ATCC BAA-1014 / DSM 16622 / JCM 12645 / Bem) (Geobacter bemidjiensis) protein is Argininosuccinate synthase.